Consider the following 239-residue polypeptide: Ribonuclease P protein component 3 (239 aa).

It belongs to the eukaryotic/archaeal RNase P protein component 3 family. Consists of a catalytic RNA component and at least 4-5 protein subunits.

It is found in the cytoplasm. It carries out the reaction Endonucleolytic cleavage of RNA, removing 5'-extranucleotides from tRNA precursor.. Functionally, part of ribonuclease P, a protein complex that generates mature tRNA molecules by cleaving their 5'-ends. This is Ribonuclease P protein component 3 from Methanosarcina acetivorans (strain ATCC 35395 / DSM 2834 / JCM 12185 / C2A).